A 397-amino-acid chain; its full sequence is Na(+)/H(+) antiporter NhaA 3 (397 aa).

The next 11 helical transmembrane spans lie at 18–38, 63–83, 98–118, 129–149, 158–178, 181–201, 207–224, 269–289, 306–326, 340–360, and 373–393; these read AGGI…NSPF, LLLW…GLEL, IALP…IYWW, GWAI…ALLG, IFLT…IAFF, SKIS…LFIC, TTLR…VALL, VAFL…FIGM, LFFG…LFGW, GVAV…SLAF, and LGIV…LRSA.

It belongs to the NhaA Na(+)/H(+) (TC 2.A.33) antiporter family.

It localises to the cell inner membrane. The enzyme catalyses Na(+)(in) + 2 H(+)(out) = Na(+)(out) + 2 H(+)(in). Na(+)/H(+) antiporter that extrudes sodium in exchange for external protons. The sequence is that of Na(+)/H(+) antiporter NhaA 3 from Saccharophagus degradans (strain 2-40 / ATCC 43961 / DSM 17024).